The following is a 199-amino-acid chain: Protein-methionine-sulfoxide reductase heme-binding subunit MsrQ (199 aa).

4 helical membrane passes run 10-30 (WLKV…FWAI), 82-102 (LWCF…ELGI), 116-136 (PYLT…LTST), and 153-173 (VVYL…KILS).

It belongs to the MsrQ family. As to quaternary structure, heterodimer of a catalytic subunit (MsrP) and a heme-binding subunit (MsrQ). FMN is required as a cofactor. It depends on heme b as a cofactor.

The protein localises to the cell inner membrane. Its function is as follows. Part of the MsrPQ system that repairs oxidized periplasmic proteins containing methionine sulfoxide residues (Met-O), using respiratory chain electrons. Thus protects these proteins from oxidative-stress damage caused by reactive species of oxygen and chlorine generated by the host defense mechanisms. MsrPQ is essential for the maintenance of envelope integrity under bleach stress, rescuing a wide series of structurally unrelated periplasmic proteins from methionine oxidation, including the primary periplasmic chaperone SurA and the lipoprotein Pal. MsrQ provides electrons for reduction to the reductase catalytic subunit MsrP, using the quinone pool of the respiratory chain. This Salmonella newport (strain SL254) protein is Protein-methionine-sulfoxide reductase heme-binding subunit MsrQ.